A 453-amino-acid chain; its full sequence is Ribosome biogenesis protein YTM1 (453 aa).

The tract at residues 8-89 (VKLRFFTREQ…ETFLNVEYTR (82 aa)) is ubiquitin-like (UBL) domain. The interval 99–453 (SFSNEDWVSS…INKGDNIFKS (355 aa)) is sufficient for interaction with ERB1 and association with 66S pre-ribosomes. WD repeat units follow at residues 101-139 (SNEDWVSSLDVGDNNKIISGSYDGVVRTWNLSGKIEKQY), 141-179 (GHSAPIRAVKYISNTRMVSGGNDRTLRLWKTKNEDLKQP), 199-237 (GHKAPVVSIDVSDNSRILSGSYDNTIGFWSTIYKEMTVV), 278-318 (SHTG…CIDT), 320-359 (TTSYSLLSLAQLPTLNLLACGSSARHITLHDPRIGSTSKI), 366-406 (GHKN…PMYT), and 417-453 (GVNDKVFAVNWSKNVGIISAGQDKKIQINKGDNIFKS).

This sequence belongs to the WD repeat WDR12/YTM1 family. As to quaternary structure, component of the NOP7 complex, composed of ERB1, NOP7 and YTM1. The complex is held together by ERB1, which interacts with NOP7 via its N-terminal domain and with YTM1 via a high-affinity interaction between the seven-bladed beta-propeller domains of the 2 proteins. The NOP7 complex associates with the 66S pre-ribosome. Interacts (via UBL domain) with MDN1 (via VWFA/MIDAS domain).

It localises to the nucleus. Its subcellular location is the nucleolus. The protein localises to the nucleoplasm. Its function is as follows. Component of the NOP7 complex, which is required for maturation of the 25S and 5.8S ribosomal RNAs and formation of the 60S ribosome. This Vanderwaltozyma polyspora (strain ATCC 22028 / DSM 70294 / BCRC 21397 / CBS 2163 / NBRC 10782 / NRRL Y-8283 / UCD 57-17) (Kluyveromyces polysporus) protein is Ribosome biogenesis protein YTM1.